Reading from the N-terminus, the 275-residue chain is MKYGKLWPIGVSVLGVIALHVRVLSLEVENSSAVDTCSTHTILPGPKGDDGEAGDTGVLGKLGKDGPKGQKGNKGIIGDSGDLGLIGKIGPIGSKGDKGHKGLPGLPGGKGKSGSYCDCGRYRKVVGQLDVNVAHLKSSLKFVKNVIAGIRETDEKYYYIVREERNYRDALTQCRIRGGTLAMPKDQATNSLIADYISKMGLFRVFIGINDIEKEKQFVYADNSPLQTYSSWKAGEPNDGSGYEDCVEMLSTGHWNDVDCSLTIYFVCEFLKKTK.

The N-terminal stretch at 1–25 (MKYGKLWPIGVSVLGVIALHVRVLS) is a signal peptide. N30 carries an N-linked (GlcNAc...) asparagine glycan. Residues 39 to 76 (THTILPGPKGDDGEAGDTGVLGKLGKDGPKGQKGNKGI) are disordered. Residues 51–110 (GEAGDTGVLGKLGKDGPKGQKGNKGIIGDSGDLGLIGKIGPIGSKGDKGHKGLPGLPGGK) form the Collagen-like domain. The C-type lectin domain occupies 153–269 (TDEKYYYIVR…CSLTIYFVCE (117 aa)). Cystine bridges form between C174/C268 and C246/C260.

It belongs to the COLEC10/COLEC11 family.

Its subcellular location is the secreted. In terms of biological role, lectin that binds to various sugars: galactose &gt; mannose = fucose &gt; N-acetylglucosamine &gt; N-acetylgalactosamine. The polypeptide is Collectin-10 (colec10) (Xenopus tropicalis (Western clawed frog)).